A 99-amino-acid chain; its full sequence is Large ribosomal subunit protein bL27 (99 aa).

A propeptide spanning residues 1-10 (MKLIFDIQLF) is cleaved from the precursor.

Belongs to the bacterial ribosomal protein bL27 family. In terms of processing, the N-terminus is cleaved by ribosomal processing cysteine protease Prp.

The protein is Large ribosomal subunit protein bL27 of Caldicellulosiruptor saccharolyticus (strain ATCC 43494 / DSM 8903 / Tp8T 6331).